A 625-amino-acid chain; its full sequence is pH-response transcription factor pacC/RIM101 (625 aa).

Residues 1-34 show a composition bias toward low complexity; that stretch reads MSSQDQQQQQQPAQTQTSTSSSSNNENATTATSS. Residues 1–35 form a disordered region; the sequence is MSSQDQQQQQQPAQTQTSTSSSSNNENATTATSSI. 3 consecutive C2H2-type zinc fingers follow at residues 45 to 70, 81 to 105, and 111 to 133; these read LLCQ…CEKH, LTCG…IRVH, and HKCE…VKTH. Over residues 391 to 416 the composition is skewed to polar residues; it reads APMTATHSSHSVSSGTPALTPPSSSV. Residues 391–440 are disordered; that stretch reads APMTATHSSHSVSSGTPALTPPSSSVSYTSGNSPMSSSGMSPISRHSSTS. Low complexity predominate over residues 417-438; that stretch reads SYTSGNSPMSSSGMSPISRHSS. The YPX[LI] motif 1 signature appears at 444 to 447; it reads YPNL. Disordered regions lie at residues 455 to 543 and 584 to 625; these read SPHH…SPSV and VKDE…DDDE. 2 stretches are compositionally biased toward polar residues: residues 461–472 and 490–514; these read TAPTSTLGTNFD and GLNS…SPKE. The YPX[LI] motif 2 signature appears at 615-618; sequence YPVL.

The protein belongs to the pacC/RIM101 family. Activated by C-terminal proteolytic cleavage by signaling protease (probably palB/RIM13) at neutral to alkaline ambient pH.

The protein resides in the cytoplasm. Its subcellular location is the nucleus. Transcription factor that mediates regulation of both acid- and alkaline-expressed genes in response to ambient pH. At alkaline ambient pH, activates transcription of alkaline-expressed genes (including pac1 itself) and represses transcription of acid-expressed genes. This Sclerotinia sclerotiorum (White mold) protein is pH-response transcription factor pacC/RIM101 (pac1).